The sequence spans 501 residues: Glucans biosynthesis protein G (501 aa).

The first 24 residues, 1-24 (MNRRQVLAALAAIPLLPEAFPANA), serve as a signal peptide directing secretion.

Belongs to the OpgD/OpgG family.

Its subcellular location is the periplasm. Its pathway is glycan metabolism; osmoregulated periplasmic glucan (OPG) biosynthesis. Functionally, involved in the biosynthesis of osmoregulated periplasmic glucans (OPGs). In Rhodopseudomonas palustris (strain BisA53), this protein is Glucans biosynthesis protein G.